A 546-amino-acid polypeptide reads, in one-letter code: Type II methyltransferase M.XhoI (546 aa).

Belongs to the N(4)/N(6)-methyltransferase family.

It catalyses the reaction a 2'-deoxyadenosine in DNA + S-adenosyl-L-methionine = an N(6)-methyl-2'-deoxyadenosine in DNA + S-adenosyl-L-homocysteine + H(+). Its function is as follows. A gamma subtype methylase, recognizes the double-stranded sequence 5'-CTCGAG-3', methylates A-5 on both strands, and protects the DNA from cleavage by the XhoI endonuclease. The polypeptide is Type II methyltransferase M.XhoI (Xanthomonas vasicola).